A 406-amino-acid polypeptide reads, in one-letter code: Arginine deiminase (406 aa).

Cys396 serves as the catalytic Amidino-cysteine intermediate.

The protein belongs to the arginine deiminase family.

It localises to the cytoplasm. It carries out the reaction L-arginine + H2O = L-citrulline + NH4(+). The protein operates within amino-acid degradation; L-arginine degradation via ADI pathway; carbamoyl phosphate from L-arginine: step 1/2. The protein is Arginine deiminase of Vibrio vulnificus (strain YJ016).